We begin with the raw amino-acid sequence, 138 residues long: MRITFVCTGNTCRSPIAESIAKKMLVDDTINSRGLFAIDGQSVSPESLEVIMEHNLPEPTVAKQFSEKDLNSDLILTMTDMHKQQLVSHYGDNGRIYQLSEYVGEIGDIVDPFGGSIDTYRQTFEQLLYLIGKLRTNS.

The active-site Nucleophile is Cys7. The active site involves Arg13. Asp111 functions as the Proton donor in the catalytic mechanism.

The protein belongs to the low molecular weight phosphotyrosine protein phosphatase family.

The enzyme catalyses O-phospho-L-tyrosyl-[protein] + H2O = L-tyrosyl-[protein] + phosphate. In terms of biological role, dephosphorylates the phosphotyrosine-containing proteins. This Staphylococcus haemolyticus (strain JCSC1435) protein is Low molecular weight protein-tyrosine-phosphatase PtpB (ptpB).